Reading from the N-terminus, the 65-residue chain is Weak toxin CM-13b (65 aa).

Cystine bridges form between Cys3-Cys24, Cys6-Cys11, Cys17-Cys42, Cys46-Cys57, and Cys58-Cys63.

This sequence belongs to the three-finger toxin family. Ancestral subfamily. Orphan group II sub-subfamily. In terms of tissue distribution, expressed by the venom gland.

The protein localises to the secreted. In terms of biological role, binds with low affinity to muscular (alpha-1-beta-1-delta-epsilon/CHRNA1-CHRNB1-CHRND-CHRNE) and very low affinity to neuronal (alpha-7/CHRNA7) nicotinic acetylcholine receptor (nAChR). The sequence is that of Weak toxin CM-13b from Naja annulifera (Banded Egyptian cobra).